The following is a 316-amino-acid chain: D-alanine--D-alanine ligase (316 aa).

An ATP-grasp domain is found at 109-304 (KRLWRGMDLP…FDEMVLQILA (196 aa)). Residue 135–190 (AADLGLPLIVKPAREGSSLGMMKVESIEALQSAYREAVIFDTAVFAERWLPGAEYT) participates in ATP binding. Positions 258, 271, and 273 each coordinate Mg(2+).

Belongs to the D-alanine--D-alanine ligase family. It depends on Mg(2+) as a cofactor. The cofactor is Mn(2+).

It localises to the cytoplasm. It catalyses the reaction 2 D-alanine + ATP = D-alanyl-D-alanine + ADP + phosphate + H(+). It participates in cell wall biogenesis; peptidoglycan biosynthesis. Cell wall formation. This Nitrosococcus oceani (strain ATCC 19707 / BCRC 17464 / JCM 30415 / NCIMB 11848 / C-107) protein is D-alanine--D-alanine ligase.